The primary structure comprises 75 residues: Large ribosomal subunit protein bL31 (75 aa).

Zn(2+) contacts are provided by cysteine 16, cysteine 18, cysteine 37, and cysteine 40.

Belongs to the bacterial ribosomal protein bL31 family. Type A subfamily. In terms of assembly, part of the 50S ribosomal subunit. Zn(2+) serves as cofactor.

Its function is as follows. Binds the 23S rRNA. In Baumannia cicadellinicola subsp. Homalodisca coagulata, this protein is Large ribosomal subunit protein bL31.